Consider the following 132-residue polypeptide: MFDIGFWELVLISVVGLVVLGPERLPHAIRSVSRFIGAAKNMANSVKDELSHELKVQELQENLRKAEQMGMEDLSPELKSSVEELKKAAQSVNRPYADKAQSETETAKAEPVTESAEKVEEIKVSAADKKAE.

The chain crosses the membrane as a helical span at residues Met1–Gly21. The tract at residues Gly70–Glu132 is disordered. 2 stretches are compositionally biased toward basic and acidic residues: residues Tyr96 to Lys108 and Ser115 to Glu132.

It belongs to the TatB family. The Tat system comprises two distinct complexes: a TatABC complex, containing multiple copies of TatA, TatB and TatC subunits, and a separate TatA complex, containing only TatA subunits. Substrates initially bind to the TatABC complex, which probably triggers association of the separate TatA complex to form the active translocon.

The protein localises to the cell inner membrane. Part of the twin-arginine translocation (Tat) system that transports large folded proteins containing a characteristic twin-arginine motif in their signal peptide across membranes. Together with TatC, TatB is part of a receptor directly interacting with Tat signal peptides. TatB may form an oligomeric binding site that transiently accommodates folded Tat precursor proteins before their translocation. This chain is Sec-independent protein translocase protein TatB, found in Vibrio parahaemolyticus serotype O3:K6 (strain RIMD 2210633).